The following is a 215-amino-acid chain: Probable GTP-binding protein EngB (215 aa).

Positions 30-204 (TGIEVAFAGR…RQKLDTWFSE (175 aa)) constitute an EngB-type G domain. GTP-binding positions include 38 to 45 (GRSNAGKS), 65 to 69 (GRTQL), 83 to 86 (DLPG), 150 to 153 (TKAD), and 183 to 185 (FSS). Mg(2+)-binding residues include Ser-45 and Thr-67.

The protein belongs to the TRAFAC class TrmE-Era-EngA-EngB-Septin-like GTPase superfamily. EngB GTPase family. The cofactor is Mg(2+).

Functionally, necessary for normal cell division and for the maintenance of normal septation. The sequence is that of Probable GTP-binding protein EngB from Escherichia coli O1:K1 / APEC.